A 242-amino-acid polypeptide reads, in one-letter code: Linker for activation of T-cells family member 1 (242 aa).

The Extracellular portion of the chain corresponds to 1 to 4; the sequence is MEAD. The helical; Signal-anchor for type III membrane protein transmembrane segment at 5–28 threads the bilayer; the sequence is ALSPVGLGLLLLPFLVTLLAALCV. S-palmitoyl cysteine attachment occurs at residues Cys-27 and Cys-30. At 29–242 the chain is on the cytoplasmic side; that stretch reads RCRELPVSYD…PDYENLQELN (214 aa). Phosphothreonine is present on Thr-40. A phosphoserine mark is found at Ser-41, Ser-44, Ser-87, Ser-104, Ser-109, and Ser-112. Residues 78 to 118 form a disordered region; the sequence is QPDLLPIPRSPQPLGGSHRMPSSQQNSDDANSVASYENQEP. Residues 97 to 115 are compositionally biased toward polar residues; sequence MPSSQQNSDDANSVASYEN. The interaction with PLCG1 stretch occupies residues 136–139; that stretch reads YLVV. Residue Tyr-175 is modified to Phosphotyrosine. Interaction with GRB2, GRAP2 and PIK3R1 stretches follow at residues 175–178 and 195–198; these read YVNV. A disordered region spans residues 176–242; sequence VNVPESEESA…PDYENLQELN (67 aa). Residues Ser-199, Ser-212, and Ser-215 each carry the phosphoserine modification. Positions 217–234 are enriched in acidic residues; that stretch reads EVEDEGEEEGVDGEEAPD. Phosphotyrosine is present on Tyr-235.

As to quaternary structure, when phosphorylated, interacts directly with the PIK3R1 subunit of phosphoinositide 3-kinase and the SH2 domains of GRB2, GRAP, GRAP2, PLCG1 and PLCG2. Interacts indirectly with CBL, SOS, VAV, and LCP2. Interacts with SHB and SKAP2. Interacts with FCGR1A. Interacts with CLNK. Interacts with GRB2, PLCG1 and THEMIS upon TCR activation in thymocytes. Interacts with THEMIS2. In terms of processing, phosphorylated on tyrosines by ZAP70 upon TCR activation, or by SYK upon other immunoreceptor activation; which leads to the recruitment of multiple signaling molecules. Is one of the most prominently tyrosine-phosphorylated proteins detected following TCR engagement. May be dephosphorylated by PTPRJ. Phosphorylated by ITK leading to the recruitment of VAV1 to LAT-containing complexes. Post-translationally, palmitoylation of Cys-27 and Cys-30 is required for raft targeting and efficient phosphorylation. Phosphorylated on tyrosines by ZAP70 upon TCR activation, or by SYK upon other immunoreceptor activation; which leads to the recruitment of multiple signaling molecules. Is one of the most prominently tyrosine-phosphorylated proteins detected following TCR engagement. May be dephosphorylated by PTPRJ. Phosphorylated by ITK leading to the recruitment of VAV1 to LAT-containing complexes. In terms of processing, 'Lys-63'-linked ubiquitinated by TRAF6. As to expression, expressed in T-cells and mast cells.

The protein resides in the cell membrane. Its function is as follows. Required for TCR (T-cell antigen receptor)- and pre-TCR-mediated signaling, both in mature T-cells and during their development. Involved in FCGR3 (low affinity immunoglobulin gamma Fc region receptor III)-mediated signaling in natural killer cells and FCER1 (high affinity immunoglobulin epsilon receptor)-mediated signaling in mast cells. Couples activation of these receptors and their associated kinases with distal intracellular events such as mobilization of intracellular calcium stores, PKC activation, MAPK activation or cytoskeletal reorganization through the recruitment of PLCG1, GRB2, GRAP2, and other signaling molecules. The chain is Linker for activation of T-cells family member 1 (Lat) from Mus musculus (Mouse).